The following is an 820-amino-acid chain: DNA mismatch repair protein MutS (820 aa).

ATP is bound at residue 615 to 622 (GPNMAGKS).

The protein belongs to the DNA mismatch repair MutS family.

This protein is involved in the repair of mismatches in DNA. It is possible that it carries out the mismatch recognition step. This protein has a weak ATPase activity. This chain is DNA mismatch repair protein MutS, found in Anaplasma phagocytophilum (strain HZ).